A 307-amino-acid chain; its full sequence is Agmatinase (307 aa).

6 residues coordinate Mn(2+): His126, Asp149, His151, Asp153, Asp230, and Asp232.

The protein belongs to the arginase family. Agmatinase subfamily. Mn(2+) is required as a cofactor.

It catalyses the reaction agmatine + H2O = urea + putrescine. Its pathway is amine and polyamine biosynthesis; putrescine biosynthesis via agmatine pathway; putrescine from agmatine: step 1/1. In terms of biological role, catalyzes the formation of putrescine from agmatine. This is Agmatinase from Sodalis glossinidius (strain morsitans).